Here is a 387-residue protein sequence, read N- to C-terminus: Phosphoglycerate kinase (387 aa).

Residues 21–23, R36, 59–62, R113, and R146 contribute to the substrate site; these read DLN and HLGR. ATP is bound by residues K197, E314, and 340–343; that span reads GGDT.

It belongs to the phosphoglycerate kinase family. In terms of assembly, monomer.

It is found in the cytoplasm. The catalysed reaction is (2R)-3-phosphoglycerate + ATP = (2R)-3-phospho-glyceroyl phosphate + ADP. Its pathway is carbohydrate degradation; glycolysis; pyruvate from D-glyceraldehyde 3-phosphate: step 2/5. The chain is Phosphoglycerate kinase from Photorhabdus laumondii subsp. laumondii (strain DSM 15139 / CIP 105565 / TT01) (Photorhabdus luminescens subsp. laumondii).